The primary structure comprises 213 residues: Probable GTP-binding protein EngB (213 aa).

The region spanning 25–203 is the EngB-type G domain; that stretch reads EGTEVAFAGR…EDVLNGWLLP (179 aa). GTP is bound by residues 33–40, 60–64, 80–83, 147–150, and 179–184; these read GRSNAGKS, GRTQL, DLPG, TKAD, and AQMFSA. Residues Ser40 and Thr62 each contribute to the Mg(2+) site.

The protein belongs to the TRAFAC class TrmE-Era-EngA-EngB-Septin-like GTPase superfamily. EngB GTPase family. Mg(2+) serves as cofactor.

Functionally, necessary for normal cell division and for the maintenance of normal septation. The chain is Probable GTP-binding protein EngB from Saccharophagus degradans (strain 2-40 / ATCC 43961 / DSM 17024).